Here is a 475-residue protein sequence, read N- to C-terminus: Tetratricopeptide repeat protein 29 (475 aa).

TPR repeat units lie at residues 92-131 (DALR…EDAE), 136-173 (FEDV…AQLI), 182-215 (AEAH…TQGR), 234-267 (LRTY…AKEG), 274-307 (GEAS…STEL), 314-347 (GRAY…ARNN), and 354-387 (VRAS…TVEL). The segment at 436-475 (DIEPDPVTEEFRGSTVETVSQNSEHLEELSRFPGDQKNET) is disordered. Basic and acidic residues predominate over residues 459-475 (EHLEELSRFPGDQKNET).

Its subcellular location is the cytoplasm. The protein localises to the cytoskeleton. The protein resides in the flagellum axoneme. Axonemal protein which is implicated in axonemal and/or peri-axonemal structure assembly and regulates flagellum assembly and beating and therefore sperm motility. This Macaca fascicularis (Crab-eating macaque) protein is Tetratricopeptide repeat protein 29 (TTC29).